A 319-amino-acid chain; its full sequence is Protein SICKLE (319 aa).

Disordered stretches follow at residues 1 to 59, 71 to 239, and 262 to 299; these read MEDS…TQRF, SFKK…PGAE, and CSDA…SNQQ. 2 stretches are compositionally biased toward polar residues: residues 27–56 and 78–88; these read TTGT…SFET and PKQQYISSPSH. Positions 93 to 103 are enriched in pro residues; sequence PVPPQFPPSVP. A compositionally biased stretch (polar residues) spans 185–210; sequence SYNNTPPQFSNYGRQNANWGGNTYPN. The segment covering 228–238 has biased composition (basic and acidic residues); that stretch reads DGGRRPMEPGA. Positions 285–299 are enriched in polar residues; it reads SVTSEATHKTSSNQQ.

Interacts with ubiquitin thioesterases UBP12 and UBP13, and with protein phosphatase 2A subunits PP2AB1, PP2AB2, PP2A3, PP2A4, PP2AA1 and PP2AA2. Expressed in the shoot apical meristem (SAM), embryos, seedlings, root tips, and root and leaf primordia.

It localises to the nucleus. The protein resides in the cytoplasm. The protein localises to the cytosol. Functionally, involved in miRNAs and siRNAs biogenesis and thus promotes gene silencing. Modulates auxin (IAA) transport-related developmental programs by regulating protein phosphatase 2A (PP2As)-driven auxin efflux carrier PIN proteins recycling and polarity. Required during development. Necessary for abiotic stress (e.g. chilling and salt) tolerance. In Arabidopsis thaliana (Mouse-ear cress), this protein is Protein SICKLE.